We begin with the raw amino-acid sequence, 306 residues long: D-alanine--D-alanine ligase (306 aa).

One can recognise an ATP-grasp domain in the interval 101–300 (RIMLAAAGVP…FGELVTWMVE (200 aa)). 128 to 182 (MPTPYVLKPNAGGSSVGVFIVREDQAHPPQELTREDWPHGENLLAEEFIPGLELT) serves as a coordination point for ATP. Mg(2+)-binding residues include Asp-250, Glu-267, and Asn-269.

This sequence belongs to the D-alanine--D-alanine ligase family. It depends on Mg(2+) as a cofactor. Requires Mn(2+) as cofactor.

It is found in the cytoplasm. The enzyme catalyses 2 D-alanine + ATP = D-alanyl-D-alanine + ADP + phosphate + H(+). It participates in cell wall biogenesis; peptidoglycan biosynthesis. Cell wall formation. The chain is D-alanine--D-alanine ligase from Xanthobacter autotrophicus (strain ATCC BAA-1158 / Py2).